Here is a 628-residue protein sequence, read N- to C-terminus: Hepatocyte nuclear factor 1-alpha (628 aa).

Residues 1–31 (MVSKLSQLQTELLAALLESGLSKEALIQALG) form a dimerization region. An HNF-p1 domain is found at 1 to 32 (MVSKLSQLQTELLAALLESGLSKEALIQALGE). Residues 47–79 (GESCGGTRGDLTELPNGLGETRGSEDDTDDDGE) are disordered. A Phosphoserine modification is found at Ser70. Thr74 carries the post-translational modification Phosphothreonine. The region spanning 87 to 182 (KELENLSPEE…VAQQFTHAGQ (96 aa)) is the POU-specific atypical domain. Residue Ser93 is modified to Phosphoserine. A Glycyl lysine isopeptide (Lys-Gly) (interchain with G-Cter in ubiquitin) cross-link involves residue Lys117. 4 interaction with DNA regions span residues 130–132 (QRE), 143–149 (HLSQHLN), 155–158 (KTQK), and 203–206 (RFKW). The interval 183-205 (GGLIEEPTGDELPTKKGRRNRFK) is disordered. A Nuclear localization signal motif is present at residues 197–205 (KKGRRNRFK). Positions 199 to 279 (GRRNRFKWGP…NRRKEEAFRH (81 aa)) form a DNA-binding region, homeobox; HNF1-type. Ser247 carries the post-translational modification Phosphoserine. Interaction with DNA stretches follow at residues 263-265 (RVY) and 270-273 (NRRK). Disordered regions lie at residues 284 to 338 (DTYN…SSSG) and 541 to 585 (FTSD…LSTS). Residues 288-298 (GPPPGPGPGPA) are compositionally biased toward pro residues. Phosphoserine is present on Ser313. Polar residues-rich tracts occupy residues 324–338 (QSATSEAAEVPSSSG) and 558–575 (SPATTIHIPSQDPSNIQH).

This sequence belongs to the HNF1 homeobox family. As to quaternary structure, binds DNA as a dimer. Heterotetramer with PCBD1; formed by a dimer of dimers. Interacts with PCBD1. Interacts with BHLHE41. Interacts with NR5A2. Interacts with SPOP; this interaction promotes ubiquitination and degradation of HNF1A. Post-translationally, ubiquitinated in s SPOP-dependent manner; leading to prteasomal degradation. Liver.

The protein resides in the nucleus. Its function is as follows. Transcriptional activator that regulates the tissue specific expression of multiple genes, especially in pancreatic islet cells and in liver. Binds to the inverted palindrome 5'-GTTAATNATTAAC-3'. Activates the transcription of CYP1A2, CYP2E1 and CYP3A11. The sequence is that of Hepatocyte nuclear factor 1-alpha (Hnf1a) from Rattus norvegicus (Rat).